A 769-amino-acid chain; its full sequence is MLDSFKEDPKLRKLLFSGHFGLEKENIRVTSDGKLALTPHPAIFGPKEDNPYIKTDFSESQIEMITPVTDSIDSVYEWLENLHNIVSLRSENELLWPSSNPPILPAEEDIPIAEYKTPDSPDRKYREHLAKGYGKKIQLLSGIHYNFSFPEALIDGLYDKISLPEESKQDFKNRLYLKVAKYFMKNRWLLIYLTGASPVYLADFSKTKHDESLPDGSSALRDGISLRNSNAGYKNKEALYVDYNSFDAYISSISNYIEAGKIESMREFYNPIRLKNAHTDQTVESLAEHGVEYLEIRSIDLNPLESNGISKDELAFIHLFLIKGLLSEDRELCSNNQQLADENENNIALNGLAQPALKNCDNEEISVVEAGLLELNKMSDFIQSLRPEDTKLQAIIEKQKERLLHPEKTIAAQVKQQVTKEGYVDFHLNQAKTYMEETEALAYKLIGAEDMELSTQIIWKDAIARGIKVDVLDRAENFLRFQKGDHVEYVKQASKTSKDNYVSVLMMENKVVTKLVLAEHDIRVPFGDSFSDQALALEAFSLFEDKQIVVKPKSTNYGWGISIFKNKFTLEDYQEALNIAFSYDSSVIIEEFIPGDEFRFLVINDKVEAVLKRVPANVTGDGIHTVRELVEEKNTDPLRGTDHLKPLEKIRTGPEETLMLSMQNLSWDSIPKAEEIIYLRENSNVSTGGDSIDYTEEMDDYFKEIAIRATQVLDAKICGVDIIVPRETIDRDKHAIIELNFNPAMHMHCFPYQGEKKKIGDKILDFLFE.

Residues 1-347 (MLDSFKEDPK…QLADENENNI (347 aa)) form a glutamate--cysteine ligase region. The 255-residue stretch at 514–768 (KLVLAEHDIR…IGDKILDFLF (255 aa)) folds into the ATP-grasp domain. 541–599 (SLFEDKQIVVKPKSTNYGWGISIFKNKFTLEDYQEALNIAFSYDSSVIIEEFIPGDEFR) serves as a coordination point for ATP. D721, E738, and N740 together coordinate Mg(2+). Mn(2+) is bound by residues D721, E738, and N740.

This sequence in the N-terminal section; belongs to the glutamate--cysteine ligase type 1 family. Type 2 subfamily. Monomer. Mg(2+) is required as a cofactor. Mn(2+) serves as cofactor.

The catalysed reaction is L-cysteine + L-glutamate + ATP = gamma-L-glutamyl-L-cysteine + ADP + phosphate + H(+). It catalyses the reaction gamma-L-glutamyl-L-cysteine + glycine + ATP = glutathione + ADP + phosphate + H(+). It functions in the pathway sulfur metabolism; glutathione biosynthesis; glutathione from L-cysteine and L-glutamate: step 1/2. Its pathway is sulfur metabolism; glutathione biosynthesis; glutathione from L-cysteine and L-glutamate: step 2/2. Functionally, synthesizes glutathione from L-glutamate and L-cysteine via gamma-L-glutamyl-L-cysteine. The polypeptide is Glutathione biosynthesis bifunctional protein GshAB (Listeria monocytogenes serotype 4b (strain F2365)).